Reading from the N-terminus, the 192-residue chain is Hydrogenase expression/formation protein HupD (192 aa).

Positions 23, 69, and 100 each coordinate Ni(2+).

This sequence belongs to the peptidase A31 family.

Functionally, not known. Could be involved in the processing of hydrogenase. The sequence is that of Hydrogenase expression/formation protein HupD (hupD) from Bradyrhizobium diazoefficiens (strain JCM 10833 / BCRC 13528 / IAM 13628 / NBRC 14792 / USDA 110).